A 204-amino-acid polypeptide reads, in one-letter code: Large ribosomal subunit protein bL25 (204 aa).

Belongs to the bacterial ribosomal protein bL25 family. CTC subfamily. As to quaternary structure, part of the 50S ribosomal subunit; part of the 5S rRNA/L5/L18/L25 subcomplex. Contacts the 5S rRNA. Binds to the 5S rRNA independently of L5 and L18.

This is one of the proteins that binds to the 5S RNA in the ribosome where it forms part of the central protuberance. This chain is Large ribosomal subunit protein bL25, found in Pseudoalteromonas translucida (strain TAC 125).